The following is a 201-amino-acid chain: Ras-related protein Rab-1B (201 aa).

Met1 is subject to N-acetylmethionine. Residues Ser17, Gly18, Val19, Gly20, Lys21, Ser22, Cys23, Tyr33, Thr34, Glu35, Ser36, Ser39, and Thr40 each contribute to the GTP site. Ser22 contributes to the Mg(2+) binding site. Residues 30–45 (DDTYTESYISTIGVDF) carry the Switch 1 motif. Mg(2+) contacts are provided by Thr40 and Asp63. The switch 2 region; required for interaction with REP1/CHM stretch occupies residues 64-83 (TAGQERFRTITSSYYRGAHG). Residues 65–80 (AGQERFRTITSSYYRG) carry the Switch 2 motif. Gly66 lines the GTP pocket. Ser76 carries the (Microbial infection) O-(2-cholinephosphoryl)serine modification. Tyr77 is modified ((Microbial infection) O-AMP-tyrosine). Positions 121, 122, 124, 151, 152, and 153 each coordinate GTP. Residues 174-201 (GPGAASGGERPNLKIDSTPVKPAGGGCC) are disordered. S-geranylgeranyl cysteine attachment occurs at residues Cys200 and Cys201. Cys201 is modified (cysteine methyl ester).

It belongs to the small GTPase superfamily. Rab family. Interacts with MICAL1 and MICAL2. Interacts (in GTP-bound form) with MICALCL, MICAL1 and MILCAL3. Interacts with GDI1; the interaction requires the GDP-bound state. Interacts with CHM/REP1; the interaction requires the GDP-bound form and is necessary for prenylation by GGTase II. Interacts with RabGAP TBC1D20. Interacts (in GDP-bound form) with lipid phosphatase MTMR6 (via GRAM domain); the interaction regulates MTMR6 recruitment to the endoplasmic reticulum-Golgi intermediate compartment. Interacts (in GDP-bound form) with lipid phosphatase MTMR7. In terms of assembly, (Microbial infection) Interacts with L.pneumophila AnkX. Interacts with L.pneumophila Lem3. Interacts with L.pneumophila SidD. Interacts with L.pneumophila DrrA. Mg(2+) is required as a cofactor. Post-translationally, prenylated; by GGTase II, only after interaction of the substrate with Rab escort protein 1 (REP1). In terms of processing, (Microbial infection) AMPylation at Tyr-77 by L.pneumophila DrrA occurs in the switch 2 region and leads to moderate inactivation of the GTPase activity. It appears to prolong the lifetime of the GTP state of RAB1B by restricting access of GTPase effectors to switch 2 and blocking effector-stimulated GTP hydrolysis, thereby rendering RAB1B constitutively active. It is later de-AMPylated by L.pneumophila SidD, releasing RAB1B from bacterial phagosomes. (Microbial infection) Phosphocholinated at Ser-76 by L.pneumophila AnkX, leading to displace GDP dissociation inhibitors (GDI). Both GDP-bound and GTP-bound forms can be phosphocholinated. Dephosphocholinated by L.pneumophila Lem3, restoring accessibility to L.pneumophila GTPase effector LepB. Post-translationally, (Microbial infection) Glycosylated by S.typhimurium protein Ssek3: arginine GlcNAcylation prevents GTPase activity, thereby disrupting vesicular protein transport from the endoplasmic reticulum (ER) to the Golgi compartment.

Its subcellular location is the cytoplasm. The protein resides in the membrane. It localises to the preautophagosomal structure membrane. It is found in the perinuclear region. The catalysed reaction is GTP + H2O = GDP + phosphate + H(+). Regulated by guanine nucleotide exchange factors (GEFs) which promote the exchange of bound GDP for free GTP. Regulated by GTPase activating proteins (GAPs) including TBC1D20 which increases the GTP hydrolysis activity. Inhibited by GDP dissociation inhibitors (GDIs). Functionally, the small GTPases Rab are key regulators of intracellular membrane trafficking, from the formation of transport vesicles to their fusion with membranes. Rabs cycle between an inactive GDP-bound form and an active GTP-bound form that is able to recruit to membranes different set of downstream effectors directly responsible for vesicle formation, movement, tethering and fusion. Plays a role in the initial events of the autophagic vacuole development which take place at specialized regions of the endoplasmic reticulum. Regulates vesicular transport between the endoplasmic reticulum and successive Golgi compartments. Required to modulate the compacted morphology of the Golgi. Promotes the recruitment of lipid phosphatase MTMR6 to the endoplasmic reticulum-Golgi intermediate compartment. The sequence is that of Ras-related protein Rab-1B from Homo sapiens (Human).